Reading from the N-terminus, the 317-residue chain is Beta-ketoacyl-[acyl-carrier-protein] synthase III (317 aa).

Active-site residues include C112 and H244. Residues Q245–R249 are ACP-binding. N274 is an active-site residue.

It belongs to the thiolase-like superfamily. FabH family. As to quaternary structure, homodimer.

Its subcellular location is the cytoplasm. The catalysed reaction is malonyl-[ACP] + acetyl-CoA + H(+) = 3-oxobutanoyl-[ACP] + CO2 + CoA. Its pathway is lipid metabolism; fatty acid biosynthesis. Functionally, catalyzes the condensation reaction of fatty acid synthesis by the addition to an acyl acceptor of two carbons from malonyl-ACP. Catalyzes the first condensation reaction which initiates fatty acid synthesis and may therefore play a role in governing the total rate of fatty acid production. Possesses both acetoacetyl-ACP synthase and acetyl transacylase activities. Its substrate specificity determines the biosynthesis of branched-chain and/or straight-chain of fatty acids. This Shigella sonnei (strain Ss046) protein is Beta-ketoacyl-[acyl-carrier-protein] synthase III.